The primary structure comprises 351 residues: Transaldolase (351 aa).

K138 functions as the Schiff-base intermediate with substrate in the catalytic mechanism.

Belongs to the transaldolase family. Type 2 subfamily.

It localises to the cytoplasm. The catalysed reaction is D-sedoheptulose 7-phosphate + D-glyceraldehyde 3-phosphate = D-erythrose 4-phosphate + beta-D-fructose 6-phosphate. Its pathway is carbohydrate degradation; pentose phosphate pathway; D-glyceraldehyde 3-phosphate and beta-D-fructose 6-phosphate from D-ribose 5-phosphate and D-xylulose 5-phosphate (non-oxidative stage): step 2/3. Its function is as follows. Transaldolase is important for the balance of metabolites in the pentose-phosphate pathway. The sequence is that of Transaldolase from Neisseria meningitidis serogroup C / serotype 2a (strain ATCC 700532 / DSM 15464 / FAM18).